The chain runs to 289 residues: Acetyl-coenzyme A carboxylase carboxyl transferase subunit beta (289 aa).

The 262-residue stretch at 28-289 (VMTKCPKCKK…QGGGMAVWQS (262 aa)) folds into the CoA carboxyltransferase N-terminal domain. Zn(2+) contacts are provided by cysteine 32, cysteine 35, cysteine 51, and cysteine 54. Residues 32 to 54 (CPKCKKIMYTKELLKNLKVCVNC) form a C4-type zinc finger.

This sequence belongs to the AccD/PCCB family. In terms of assembly, acetyl-CoA carboxylase is a heterohexamer composed of biotin carboxyl carrier protein (AccB), biotin carboxylase (AccC) and two subunits each of ACCase subunit alpha (AccA) and ACCase subunit beta (AccD). Zn(2+) serves as cofactor.

It localises to the cytoplasm. The enzyme catalyses N(6)-carboxybiotinyl-L-lysyl-[protein] + acetyl-CoA = N(6)-biotinyl-L-lysyl-[protein] + malonyl-CoA. It functions in the pathway lipid metabolism; malonyl-CoA biosynthesis; malonyl-CoA from acetyl-CoA: step 1/1. Its function is as follows. Component of the acetyl coenzyme A carboxylase (ACC) complex. Biotin carboxylase (BC) catalyzes the carboxylation of biotin on its carrier protein (BCCP) and then the CO(2) group is transferred by the transcarboxylase to acetyl-CoA to form malonyl-CoA. This chain is Acetyl-coenzyme A carboxylase carboxyl transferase subunit beta, found in Bacillus mycoides (strain KBAB4) (Bacillus weihenstephanensis).